The following is a 441-amino-acid chain: Argininosuccinate lyase (441 aa).

The protein belongs to the lyase 1 family. Argininosuccinate lyase subfamily.

The protein resides in the cytoplasm. The enzyme catalyses 2-(N(omega)-L-arginino)succinate = fumarate + L-arginine. Its pathway is amino-acid biosynthesis; L-arginine biosynthesis; L-arginine from L-ornithine and carbamoyl phosphate: step 3/3. The chain is Argininosuccinate lyase from Thermoanaerobacter pseudethanolicus (strain ATCC 33223 / 39E) (Clostridium thermohydrosulfuricum).